Here is a 98-residue protein sequence, read N- to C-terminus: UPF0473 protein LSL_1108 (98 aa).

It belongs to the UPF0473 family.

In Ligilactobacillus salivarius (strain UCC118) (Lactobacillus salivarius), this protein is UPF0473 protein LSL_1108.